We begin with the raw amino-acid sequence, 466 residues long: Ribulose bisphosphate carboxylase large chain (466 aa).

K4 is subject to N6,N6,N6-trimethyllysine. Substrate contacts are provided by N113 and T163. The active-site Proton acceptor is the K165. Residue K167 coordinates substrate. Residues K191, D193, and E194 each coordinate Mg(2+). K191 is modified (N6-carboxylysine). The active-site Proton acceptor is H284. The substrate site is built by R285, H317, and S369.

Belongs to the RuBisCO large chain family. Type I subfamily. In terms of assembly, heterohexadecamer of 8 large chains and 8 small chains; disulfide-linked. The disulfide link is formed within the large subunit homodimers. It depends on Mg(2+) as a cofactor. In terms of processing, the disulfide bond which can form in the large chain dimeric partners within the hexadecamer appears to be associated with oxidative stress and protein turnover.

It is found in the plastid. The protein resides in the chloroplast. The enzyme catalyses 2 (2R)-3-phosphoglycerate + 2 H(+) = D-ribulose 1,5-bisphosphate + CO2 + H2O. The catalysed reaction is D-ribulose 1,5-bisphosphate + O2 = 2-phosphoglycolate + (2R)-3-phosphoglycerate + 2 H(+). Functionally, ruBisCO catalyzes two reactions: the carboxylation of D-ribulose 1,5-bisphosphate, the primary event in carbon dioxide fixation, as well as the oxidative fragmentation of the pentose substrate in the photorespiration process. Both reactions occur simultaneously and in competition at the same active site. This Nelsonia canescens (Blue pussyleaf) protein is Ribulose bisphosphate carboxylase large chain.